The chain runs to 193 residues: Peptidyl-tRNA hydrolase (193 aa).

Y16 serves as a coordination point for tRNA. The active-site Proton acceptor is H21. TRNA contacts are provided by F67, N69, and N115.

Belongs to the PTH family. As to quaternary structure, monomer.

The protein localises to the cytoplasm. The catalysed reaction is an N-acyl-L-alpha-aminoacyl-tRNA + H2O = an N-acyl-L-amino acid + a tRNA + H(+). Hydrolyzes ribosome-free peptidyl-tRNAs (with 1 or more amino acids incorporated), which drop off the ribosome during protein synthesis, or as a result of ribosome stalling. In terms of biological role, catalyzes the release of premature peptidyl moieties from peptidyl-tRNA molecules trapped in stalled 50S ribosomal subunits, and thus maintains levels of free tRNAs and 50S ribosomes. In Baumannia cicadellinicola subsp. Homalodisca coagulata, this protein is Peptidyl-tRNA hydrolase.